The sequence spans 682 residues: Beta-galactosidase (682 aa).

A signal peptide spans 1-23 (MPGFLVRILPLLLPLLLLGPTRG). Positions 24 to 28 (LRNAT) are excised as a propeptide. N-linked (GlcNAc...) asparagine glycosylation is present at Asn26. 3 residues coordinate substrate: Tyr83, Glu129, and Asn187. The Proton donor role is filled by Glu188. The cysteines at positions 195 and 230 are disulfide-linked. Residue Asn247 is glycosylated (N-linked (GlcNAc...) asparagine). The active-site Nucleophile is Glu268. Position 333 (Tyr333) interacts with substrate. 4 N-linked (GlcNAc...) asparagine glycosylation sites follow: Asn464, Asn498, Asn545, and Asn555. Residues Cys626 and Cys634 are joined by a disulfide bond.

The protein belongs to the glycosyl hydrolase 35 family. Homodimer. May form higher multimers.

It is found in the lysosome. It carries out the reaction Hydrolysis of terminal non-reducing beta-D-galactose residues in beta-D-galactosides.. In terms of biological role, cleaves beta-linked terminal galactosyl residues from gangliosides, glycoproteins, and glycosaminoglycans. The sequence is that of Beta-galactosidase (GLB1) from Macaca fascicularis (Crab-eating macaque).